Reading from the N-terminus, the 246-residue chain is ATP synthase subunit a (246 aa).

Residues 1–3 constitute a propeptide, removed in mature form; the sequence is MFY. The next 7 membrane-spanning stretches (helical) occupy residues 21-41, 56-76, 82-102, 113-133, 138-158, 184-204, and 206-226; these read LTFS…IIIF, WGVS…GQIG, YFPL…ISMI, VAVV…GLYL, FFAL…LVLI, LMLI…LGFV, and GIIP…IAII.

This sequence belongs to the ATPase A chain family. As to quaternary structure, F-type ATPases have 2 components, CF(1) - the catalytic core - and CF(0) - the membrane proton channel. CF(1) has five subunits: alpha(3), beta(3), gamma(1), delta(1), epsilon(1). CF(0) has three main subunits: a, b and c.

It is found in the mitochondrion inner membrane. In terms of biological role, mitochondrial membrane ATP synthase (F(1)F(0) ATP synthase or Complex V) produces ATP from ADP in the presence of a proton gradient across the membrane which is generated by electron transport complexes of the respiratory chain. F-type ATPases consist of two structural domains, F(1) - containing the extramembraneous catalytic core and F(0) - containing the membrane proton channel, linked together by a central stalk and a peripheral stalk. During catalysis, ATP synthesis in the catalytic domain of F(1) is coupled via a rotary mechanism of the central stalk subunits to proton translocation. Key component of the proton channel; it may play a direct role in the translocation of protons across the membrane. This Candida parapsilosis (Yeast) protein is ATP synthase subunit a (ATP6).